A 316-amino-acid polypeptide reads, in one-letter code: tRNA pseudouridine synthase B (316 aa).

Asp-47 functions as the Nucleophile in the catalytic mechanism.

It belongs to the pseudouridine synthase TruB family. Type 1 subfamily.

It carries out the reaction uridine(55) in tRNA = pseudouridine(55) in tRNA. Its function is as follows. Responsible for synthesis of pseudouridine from uracil-55 in the psi GC loop of transfer RNAs. In Photobacterium profundum (strain SS9), this protein is tRNA pseudouridine synthase B.